The following is a 66-amino-acid chain: Large ribosomal subunit protein uL29 (66 aa).

This sequence belongs to the universal ribosomal protein uL29 family.

This is Large ribosomal subunit protein uL29 from Roseiflexus castenholzii (strain DSM 13941 / HLO8).